The following is a 224-amino-acid chain: Claudin-17 (224 aa).

At 1–7 the chain is on the cytoplasmic side; the sequence is MAFYPLQ. The helical transmembrane segment at 8–28 threads the bilayer; that stretch reads IAGLVLGFLGMVGTLATTLLP. Residues 29–81 are Extracellular-facing; the sequence is QWRVSAFVGSNIIVFERLWEGLWMNCIRQARVRLQCKFYSSLLALPPALETAR. Residues 82–102 traverse the membrane as a helical segment; the sequence is ALMCVAVALSLIALLIGICGM. Over 103-124 the chain is Cytoplasmic; it reads KQVQCTGSNERAKAYLLGTSGV. A helical membrane pass occupies residues 125-145; it reads LFILTGIFVLIPVSWTANIII. Residues 146–164 are Extracellular-facing; it reads RDFYNPAIHIGQKRELGAA. A helical membrane pass occupies residues 165 to 185; that stretch reads LFLGWASAAVLFIGGGLLCGF. The Cytoplasmic segment spans residues 186–224; sequence CCCNRKKQGYRYPVPGYRVPHTDKRRNTTMLSKTSTSYV.

It belongs to the claudin family. In terms of assembly, cannot form tight junction strands on its own. Interacts with OCLN. As to expression, in the kidney, expressed in the proximal tubule and in the Henle's loop. In the distal convoluted tubule, not expressed in all tubules. Not detected in the collecting duct (at protein level).

The protein resides in the cell junction. Its subcellular location is the tight junction. It is found in the basolateral cell membrane. It catalyses the reaction chloride(in) = chloride(out). It carries out the reaction hydrogencarbonate(in) = hydrogencarbonate(out). The catalysed reaction is bromide(in) = bromide(out). The enzyme catalyses iodide(out) = iodide(in). It catalyses the reaction fluoride(in) = fluoride(out). It carries out the reaction nitrate(in) = nitrate(out). The catalysed reaction is thiocyanate(in) = thiocyanate(out). In terms of biological role, channel-forming tight junction protein with selectivity for anions, including chloride and hydrogencarbonate, and for solutes smaller than 9 Angstrom in diameter. In the kidney proximal tubule, may be involved in paracellular reabsorption of filtered anions. Does not affect water permeability. The protein is Claudin-17 (CLDN17) of Homo sapiens (Human).